Here is an 894-residue protein sequence, read N- to C-terminus: Kinesin-like protein KIN-UB (894 aa).

Residues 1–53 form a disordered region; the sequence is MAMASSRNGAVRGSMRPVSGANSSNLRSSSFKSRIPSSAPAPRRSSSASIGAA. The segment covering 19 to 50 has biased composition (low complexity); the sequence is SGANSSNLRSSSFKSRIPSSAPAPRRSSSASI. One can recognise a Kinesin motor domain in the interval 60 to 402; the sequence is RVRVAVRLRP…ILFGQRAMKV (343 aa). 145–152 provides a ligand contact to ATP; the sequence is GQTGTGKT. The D-BOX motif lies at 372-380; sequence RTSLIVTIG. Residues 423–588 are a coiled coil; the sequence is VQLDKVIAEN…RSQLVQLTFE (166 aa). Disordered stretches follow at residues 530 to 550 and 598 to 623; these read EEEVSKVKSQSTLKTRSGEGE and RGAPGNSYSGTDSLPSRHSQARESVN. Residues 603 to 623 are compositionally biased toward polar residues; the sequence is NSYSGTDSLPSRHSQARESVN. 4 ARM repeats span residues 626–665, 667–707, 709–749, and 751–790; these read KAPFATLCEQVGLQKILQLLESDDANIRIHAVKVVANLAA, EANQ…NLAM, EVSQ…NLCG, and DKLQARLWSDGGIKALLGMVRCGHPDVLAQVARGIANFAK.

The protein belongs to the TRAFAC class myosin-kinesin ATPase superfamily. Kinesin family. Ungrouped subfamily. Interacts (via C-terminus) with NEK5. In terms of tissue distribution, expressed in the basal regions and petioles of immature leaves and in the root elongation zone.

The protein resides in the cytoplasm. It localises to the cytoskeleton. Functionally, involved in the control of epidermal-cell morphogenesis in roots and helical growth of roots by promoting microtubule depolymerization and limiting the accumulation of endoplasmic microtubules. Seems to be involved in the control of cell-file rotation (or twisting). This chain is Kinesin-like protein KIN-UB, found in Arabidopsis thaliana (Mouse-ear cress).